The chain runs to 157 residues: S-ribosylhomocysteine lyase (157 aa).

Fe cation-binding residues include His54, His58, and Cys126.

This sequence belongs to the LuxS family. In terms of assembly, homodimer. The cofactor is Fe cation.

The catalysed reaction is S-(5-deoxy-D-ribos-5-yl)-L-homocysteine = (S)-4,5-dihydroxypentane-2,3-dione + L-homocysteine. Functionally, involved in the synthesis of autoinducer 2 (AI-2) which is secreted by bacteria and is used to communicate both the cell density and the metabolic potential of the environment. The regulation of gene expression in response to changes in cell density is called quorum sensing. Catalyzes the transformation of S-ribosylhomocysteine (RHC) to homocysteine (HC) and 4,5-dihydroxy-2,3-pentadione (DPD). This is S-ribosylhomocysteine lyase from Bacillus cereus (strain 03BB102).